A 338-amino-acid polypeptide reads, in one-letter code: Phenylalanine--tRNA ligase alpha subunit (338 aa).

Glu253 serves as a coordination point for Mg(2+).

Belongs to the class-II aminoacyl-tRNA synthetase family. Phe-tRNA synthetase alpha subunit type 1 subfamily. As to quaternary structure, tetramer of two alpha and two beta subunits. The cofactor is Mg(2+).

The protein resides in the cytoplasm. The enzyme catalyses tRNA(Phe) + L-phenylalanine + ATP = L-phenylalanyl-tRNA(Phe) + AMP + diphosphate + H(+). The protein is Phenylalanine--tRNA ligase alpha subunit of Legionella pneumophila (strain Lens).